The chain runs to 135 residues: Allatotropins (135 aa).

Positions 1–22 are cleaved as a signal peptide; the sequence is MNFSMHLVLAVAAAACLCVVTA. Phe-51 carries the phenylalanine amide modification. The propeptide occupies 55–135; sequence DRPHTRAELY…SSEELLRNVA (81 aa).

As to expression, allatotropin: Expressed in corpora cardiaca (CC), corpora allata (CA), antennal lobe (AL) and gnathal ganglion (GNG) (protein level). Expression in AL detected in all animals, expression in GNG detected in most animals and expression in CA and CC detected in few animals (at protein level). Allatotropin-PP-1: Expressed in corpora cardiaca (CC), corpora allata (CA), antennal lobe (AL) and gnathal ganglion (GNG) (at protein level). Expression in AL detected in all animals and expression in GNG, CA and CC detected in some animals (at protein level).

The protein localises to the secreted. In terms of biological role, neuropeptide stimulator of juvenile hormone synthesis. In Agrotis ipsilon (Black cutworm moth), this protein is Allatotropins.